Consider the following 356-residue polypeptide: MSELKNMLDFTKEELENLVQPKFRAKQIFEWVYKKYADDFLQMSSLPKDFRVYLQKNFHFSPLKCVKDEKSKDGSIKYLFELLDGKKIEAVLLPMKEELVDENGKIIKHARYTICVSSQVGCKSGCSFCLTAKGGLSRNLSAGEIVGQILWIKKHNKIPYERRVNIVYMGMGEPLDNLKNVSKAVKILADNDALAISPRRQTISTSGLAKQIKELGEMNLGVLLAISLHAVNDELRSELMPINKAYNIASIMEAVRNFPIDQRKRVMFEYLLIDGINDKIEHAKELVKLLNGIKAKVNLILFNPHEGSLYNRPSVENAIKFQDYLSAKGVTCTIRESKGLDISAACGQLKERQSKQ.

Glu89 acts as the Proton acceptor in catalysis. The Radical SAM core domain occupies 108-341 (KHARYTICVS…CTIRESKGLD (234 aa)). Residues Cys115 and Cys346 are joined by a disulfide bond. The [4Fe-4S] cluster site is built by Cys122, Cys126, and Cys129. Residues 172–173 (GE), Ser204, 227–229 (SLH), and Asn303 contribute to the S-adenosyl-L-methionine site. Cys346 serves as the catalytic S-methylcysteine intermediate.

Belongs to the radical SAM superfamily. RlmN family. Requires [4Fe-4S] cluster as cofactor.

It is found in the cytoplasm. It carries out the reaction adenosine(2503) in 23S rRNA + 2 reduced [2Fe-2S]-[ferredoxin] + 2 S-adenosyl-L-methionine = 2-methyladenosine(2503) in 23S rRNA + 5'-deoxyadenosine + L-methionine + 2 oxidized [2Fe-2S]-[ferredoxin] + S-adenosyl-L-homocysteine. The catalysed reaction is adenosine(37) in tRNA + 2 reduced [2Fe-2S]-[ferredoxin] + 2 S-adenosyl-L-methionine = 2-methyladenosine(37) in tRNA + 5'-deoxyadenosine + L-methionine + 2 oxidized [2Fe-2S]-[ferredoxin] + S-adenosyl-L-homocysteine. In terms of biological role, specifically methylates position 2 of adenine 2503 in 23S rRNA and position 2 of adenine 37 in tRNAs. m2A2503 modification seems to play a crucial role in the proofreading step occurring at the peptidyl transferase center and thus would serve to optimize ribosomal fidelity. This is Dual-specificity RNA methyltransferase RlmN from Campylobacter lari (strain RM2100 / D67 / ATCC BAA-1060).